Reading from the N-terminus, the 240-residue chain is Uridylate kinase (240 aa).

12–15 (KLSG) contributes to the ATP binding site. Residues 20 to 25 (GEDGFG) form an involved in allosteric activation by GTP region. Glycine 54 serves as a coordination point for UMP. Residues glycine 55 and arginine 59 each coordinate ATP. UMP-binding positions include aspartate 74 and 135-142 (TGNPYFST). Residues asparagine 163, tyrosine 169, and aspartate 172 each coordinate ATP.

This sequence belongs to the UMP kinase family. In terms of assembly, homohexamer.

The protein resides in the cytoplasm. It catalyses the reaction UMP + ATP = UDP + ADP. It participates in pyrimidine metabolism; CTP biosynthesis via de novo pathway; UDP from UMP (UMPK route): step 1/1. Its activity is regulated as follows. Allosterically activated by GTP. Probably inhibited by UTP. Its function is as follows. Catalyzes the reversible phosphorylation of UMP to UDP. In Enterococcus faecalis (strain ATCC 700802 / V583), this protein is Uridylate kinase (pyrH).